We begin with the raw amino-acid sequence, 417 residues long: Peptide chain release factor subunit 1 (417 aa).

The protein belongs to the eukaryotic release factor 1 family. As to quaternary structure, heterodimer of two subunits, one of which binds GTP.

It localises to the cytoplasm. Its function is as follows. Directs the termination of nascent peptide synthesis (translation) in response to the termination codons UAA, UAG and UGA. The protein is Peptide chain release factor subunit 1 (prf1) of Thermoplasma acidophilum (strain ATCC 25905 / DSM 1728 / JCM 9062 / NBRC 15155 / AMRC-C165).